The sequence spans 728 residues: 1,4-alpha-glucan branching enzyme GlgB (728 aa).

The Nucleophile role is filled by Asp405. Catalysis depends on Glu458, which acts as the Proton donor.

Belongs to the glycosyl hydrolase 13 family. GlgB subfamily. In terms of assembly, monomer.

It carries out the reaction Transfers a segment of a (1-&gt;4)-alpha-D-glucan chain to a primary hydroxy group in a similar glucan chain.. It functions in the pathway glycan biosynthesis; glycogen biosynthesis. In terms of biological role, catalyzes the formation of the alpha-1,6-glucosidic linkages in glycogen by scission of a 1,4-alpha-linked oligosaccharide from growing alpha-1,4-glucan chains and the subsequent attachment of the oligosaccharide to the alpha-1,6 position. The chain is 1,4-alpha-glucan branching enzyme GlgB from Escherichia coli O139:H28 (strain E24377A / ETEC).